Consider the following 142-residue polypeptide: Galactose-6-phosphate isomerase subunit LacA (142 aa).

It belongs to the LacAB/RpiB family. Heteromultimeric protein consisting of LacA and LacB.

The catalysed reaction is aldehydo-D-galactose 6-phosphate = keto-D-tagatose 6-phosphate. Its pathway is carbohydrate metabolism; D-galactose 6-phosphate degradation; D-tagatose 6-phosphate from D-galactose 6-phosphate: step 1/1. In Staphylococcus haemolyticus (strain JCSC1435), this protein is Galactose-6-phosphate isomerase subunit LacA.